The chain runs to 59 residues: Venom protein 27.7 (59 aa).

Residues 1–29 (MTFITLTIGLSLRTIFLIFIFLPPPHLLA) form the signal peptide.

This sequence belongs to the non-disulfide-bridged peptide (NDBP) superfamily. In terms of tissue distribution, expressed by the venom gland.

The protein resides in the secreted. In Lychas mucronatus (Chinese swimming scorpion), this protein is Venom protein 27.7.